Here is a 621-residue protein sequence, read N- to C-terminus: UvrABC system protein C (621 aa).

In terms of domain architecture, GIY-YIG spans 13-92 (EKPGVYLMKN…IKKYRPRYNI (80 aa)). The region spanning 204 to 239 (NEVINDLKIKMEKASSELKFEEAASFRDKLLAVEKI) is the UVR domain.

The protein belongs to the UvrC family. Interacts with UvrB in an incision complex.

The protein localises to the cytoplasm. The UvrABC repair system catalyzes the recognition and processing of DNA lesions. UvrC both incises the 5' and 3' sides of the lesion. The N-terminal half is responsible for the 3' incision and the C-terminal half is responsible for the 5' incision. This is UvrABC system protein C from Clostridium novyi (strain NT).